The primary structure comprises 740 residues: Catalase-peroxidase (740 aa).

The signal sequence occupies residues 1-27 (MFKSTLPIAAAISVALTSMVLPAKALA). The segment at residues 106-228 (WHSAGVYRVH…LAAVEMGLIY (123 aa)) is a cross-link (tryptophyl-tyrosyl-methioninium (Trp-Tyr) (with M-254)). Catalysis depends on His-107, which acts as the Proton acceptor. Residues 228–254 (YVNPEGPHGKPDPLLAANDIRMSFGRM) constitute a cross-link (tryptophyl-tyrosyl-methioninium (Tyr-Met) (with W-106)). His-269 contacts heme b.

This sequence belongs to the peroxidase family. Peroxidase/catalase subfamily. As to quaternary structure, homodimer or homotetramer. It depends on heme b as a cofactor. Formation of the three residue Trp-Tyr-Met cross-link is important for the catalase, but not the peroxidase activity of the enzyme.

The enzyme catalyses H2O2 + AH2 = A + 2 H2O. It catalyses the reaction 2 H2O2 = O2 + 2 H2O. Its function is as follows. Bifunctional enzyme with both catalase and broad-spectrum peroxidase activity. In Colwellia psychrerythraea (strain 34H / ATCC BAA-681) (Vibrio psychroerythus), this protein is Catalase-peroxidase.